A 463-amino-acid polypeptide reads, in one-letter code: Siroheme synthase (463 aa).

The interval 1 to 203 is precorrin-2 dehydrogenase /sirohydrochlorin ferrochelatase; it reads MDYLPLFHKL…GQGAEAERLL (203 aa). Residues 22–23 and 43–44 each bind NAD(+); these read EI and PE. Ser128 carries the phosphoserine modification. A uroporphyrinogen-III C-methyltransferase region spans residues 216 to 463; sequence GEVYLVGAGP…LAWFEGAQNS (248 aa). Residue Pro225 coordinates S-adenosyl-L-methionine. The Proton acceptor role is filled by Asp248. The Proton donor role is filled by Lys270. Residues 301–303, Ile306, 331–332, Met383, and Gly412 contribute to the S-adenosyl-L-methionine site; these read GGD and TA.

This sequence in the N-terminal section; belongs to the precorrin-2 dehydrogenase / sirohydrochlorin ferrochelatase family. The protein in the C-terminal section; belongs to the precorrin methyltransferase family.

The enzyme catalyses uroporphyrinogen III + 2 S-adenosyl-L-methionine = precorrin-2 + 2 S-adenosyl-L-homocysteine + H(+). It carries out the reaction precorrin-2 + NAD(+) = sirohydrochlorin + NADH + 2 H(+). It catalyses the reaction siroheme + 2 H(+) = sirohydrochlorin + Fe(2+). It participates in cofactor biosynthesis; adenosylcobalamin biosynthesis; precorrin-2 from uroporphyrinogen III: step 1/1. Its pathway is cofactor biosynthesis; adenosylcobalamin biosynthesis; sirohydrochlorin from precorrin-2: step 1/1. It functions in the pathway porphyrin-containing compound metabolism; siroheme biosynthesis; precorrin-2 from uroporphyrinogen III: step 1/1. The protein operates within porphyrin-containing compound metabolism; siroheme biosynthesis; siroheme from sirohydrochlorin: step 1/1. It participates in porphyrin-containing compound metabolism; siroheme biosynthesis; sirohydrochlorin from precorrin-2: step 1/1. In terms of biological role, multifunctional enzyme that catalyzes the SAM-dependent methylations of uroporphyrinogen III at position C-2 and C-7 to form precorrin-2 via precorrin-1. Then it catalyzes the NAD-dependent ring dehydrogenation of precorrin-2 to yield sirohydrochlorin. Finally, it catalyzes the ferrochelation of sirohydrochlorin to yield siroheme. This is Siroheme synthase from Pseudomonas entomophila (strain L48).